We begin with the raw amino-acid sequence, 242 residues long: Synaptonemal complex central element protein 1-like (242 aa).

Residues 1–24 (MAGKLKPLNVEAPEATEEAEGQAK) are disordered. Residues 44 to 181 (LEPQIEDLIS…LREVERRLHS (138 aa)) are a coiled coil. A disordered region spans residues 206–242 (VRSAPEVGAGEGEAGPELPRARDEEDPEPPVAAPDAL).

The protein belongs to the SYCE family.

Its function is as follows. May be involved in meiosis. In Homo sapiens (Human), this protein is Synaptonemal complex central element protein 1-like (SYCE1L).